The primary structure comprises 369 residues: Adenosine 3'-phospho 5'-phosphosulfate transporter 2 (369 aa).

Residue asparagine 39 is glycosylated (N-linked (GlcNAc...) asparagine). A run of 6 helical transmembrane segments spans residues 46–66 (LTQFLICVAGVFVFYLIYGYL), 79–99 (YGWYLTLVQFAFYSVFGLIEL), 115–135 (MLIAFLTVGTMGLSNTSLGYL), 138–158 (PTQVIFKCCKLIPVMLGGVFI), 168–188 (VSAAVCMSLGLIWFTLADSTI), and 191–211 (NFNLTGVMLISLALCADAVIG). The N-linked (GlcNAc...) asparagine glycan is linked to asparagine 222. The next 4 helical transmembrane spans lie at 235–255 (IGFVYILLGLSCTSGLGPAVA), 266–285 (GYAFLFSLTGYFGISFVLAL), 292–314 (LLAVTVTTGRKAMTVVLSFLFFA), and 317–337 (FTFQYIWSGLLVVLGIFLNVY).

It belongs to the nucleotide-sugar transporter family. SLC35B subfamily.

It is found in the golgi apparatus membrane. It catalyses the reaction 3'-phosphoadenylyl sulfate(in) + adenosine 3',5'-bisphosphate(out) = 3'-phosphoadenylyl sulfate(out) + adenosine 3',5'-bisphosphate(in). Its function is as follows. Probably functions as a 3'-phosphoadenylyl sulfate:adenosine 3',5'-bisphosphate antiporter at the Golgi membranes. Mediates the transport from the cytosol into the lumen of the Golgi of 3'-phosphoadenylyl sulfate/adenosine 3'-phospho 5'-phosphosulfate (PAPS), a universal sulfuryl donor for sulfation events that take place in that compartment. This Mus musculus (Mouse) protein is Adenosine 3'-phospho 5'-phosphosulfate transporter 2.